Reading from the N-terminus, the 428-residue chain is Light-independent protochlorophyllide reductase subunit N (428 aa).

[4Fe-4S] cluster-binding residues include cysteine 29, cysteine 54, and cysteine 115.

This sequence belongs to the BchN/ChlN family. Protochlorophyllide reductase is composed of three subunits; BchL, BchN and BchB. Forms a heterotetramer of two BchB and two BchN subunits. It depends on [4Fe-4S] cluster as a cofactor.

It carries out the reaction chlorophyllide a + oxidized 2[4Fe-4S]-[ferredoxin] + 2 ADP + 2 phosphate = protochlorophyllide a + reduced 2[4Fe-4S]-[ferredoxin] + 2 ATP + 2 H2O. It participates in porphyrin-containing compound metabolism; bacteriochlorophyll biosynthesis (light-independent). Its function is as follows. Component of the dark-operative protochlorophyllide reductase (DPOR) that uses Mg-ATP and reduced ferredoxin to reduce ring D of protochlorophyllide (Pchlide) to form chlorophyllide a (Chlide). This reaction is light-independent. The NB-protein (BchN-BchB) is the catalytic component of the complex. The sequence is that of Light-independent protochlorophyllide reductase subunit N from Cereibacter sphaeroides (strain ATCC 17023 / DSM 158 / JCM 6121 / CCUG 31486 / LMG 2827 / NBRC 12203 / NCIMB 8253 / ATH 2.4.1.) (Rhodobacter sphaeroides).